We begin with the raw amino-acid sequence, 404 residues long: Ubiquitin-like modifier-activating enzyme 5 (404 aa).

5 residues coordinate ATP: Gly-83, Asp-104, Lys-127, Asn-150, and Asn-184. Cys-226 and Cys-229 together coordinate Zn(2+). Residue Cys-250 is the Glycyl thioester intermediate of the active site. Positions 303 and 308 each coordinate Zn(2+). Positions 372–393 (APEKSSETSEETVTAATADETS) are disordered. The span at 382–391 (ETVTAATADE) shows a compositional bias: low complexity.

It belongs to the ubiquitin-activating E1 family. UBA5 subfamily.

In terms of biological role, E1-like enzyme which activates UFM1. This Drosophila simulans (Fruit fly) protein is Ubiquitin-like modifier-activating enzyme 5.